The chain runs to 395 residues: uncharacterized protein (395 aa).

Disordered regions lie at residues 17-155 (EVKK…QVKT) and 276-304 (EERE…HEQK). Composition is skewed to polar residues over residues 42–71 (DGNN…SNVV) and 81–96 (GDAS…NVVK). A compositionally biased stretch (basic and acidic residues) spans 103–133 (VAEKPEKEDLAVIESEDKAAKPDGEIKKNVE). Residues 134–143 (TEVTSRSTSS) are compositionally biased toward low complexity. Composition is skewed to basic and acidic residues over residues 144-155 (QEKDELEKQVKT) and 276-290 (EERE…KEQS). The stretch at 224–351 (LKMNGKEDDL…QRRLKELEAM (128 aa)) forms a coiled coil. Residues 291–300 (SEGSKTANQT) are compositionally biased toward polar residues.

It is found in the cytoplasm. This is an uncharacterized protein from Schizosaccharomyces pombe (strain 972 / ATCC 24843) (Fission yeast).